The following is a 260-amino-acid chain: MDKRVAEVAGAIVEAVRKILLDKRVTEAEYRAGVDYLTEVAQTRETALLLDVFLNSTIIEGKAQRSRTSAPAIQGPYFLEGAPVVEGVLKTYDTDDHKPLIIRGTVRSDTGELLAGAVIDVWHSTPDGLYSGIHDNIPVDYYRGKLVTDSQGNYRVRTTMPVPYQIPYEGPTGRLLGHLGSHTWRPAHVHFKVRKDGFEPLTTQYYFEGGKWVDDDCCHGVTPDLITPETIEDGVRVMTLDFVIEREQAEQRKSATETVA.

Fe cation-binding residues include Y130, Y164, H188, and H190.

It belongs to the intradiol ring-cleavage dioxygenase family. Requires Fe(3+) as cofactor.

The enzyme catalyses 3-chlorocatechol + O2 = (2E,4Z)-2-chloromuconate + 2 H(+). The catalysed reaction is 3,5-dichlorocatechol + O2 = (2E,4E)-2,4-dichloromuconate + 2 H(+). It participates in aromatic compound metabolism; 3-chlorocatechol degradation. Its function is as follows. Preferentially converts 3-chlorocatechol and 3,5-dichlorocatechol as opposed to other chlorinated catechols. Retains diminished activity toward non-chlorinated substrates. In Pseudomonas putida (Arthrobacter siderocapsulatus), this protein is Chlorocatechol 1,2-dioxygenase (clcA).